Reading from the N-terminus, the 344-residue chain is Mycothiol acetyltransferase (344 aa).

Glu36 contacts 1D-myo-inositol 2-(L-cysteinylamino)-2-deoxy-alpha-D-glucopyranoside. N-acetyltransferase domains are found at residues 40-179 (LALR…TPLP) and 187-344 (VTVR…PSTG). Residues 61 to 83 (ADTSGPNVPDTPGDQNAADTSTM) are disordered. Positions 73 to 83 (GDQNAADTSTM) are enriched in polar residues. Residue 109–111 (VVV) participates in acetyl-CoA binding. 3 residues coordinate 1D-myo-inositol 2-(L-cysteinylamino)-2-deoxy-alpha-D-glucopyranoside: Glu214, Lys253, and Glu272. Residues 276 to 278 (VGV) and 283 to 289 (GGAGLGR) contribute to the acetyl-CoA site. Tyr310 provides a ligand contact to 1D-myo-inositol 2-(L-cysteinylamino)-2-deoxy-alpha-D-glucopyranoside. 315–320 (NVRAVR) lines the acetyl-CoA pocket.

The protein belongs to the acetyltransferase family. MshD subfamily. Monomer.

It catalyses the reaction 1D-myo-inositol 2-(L-cysteinylamino)-2-deoxy-alpha-D-glucopyranoside + acetyl-CoA = mycothiol + CoA + H(+). Functionally, catalyzes the transfer of acetyl from acetyl-CoA to desacetylmycothiol (Cys-GlcN-Ins) to form mycothiol. In Frankia casuarinae (strain DSM 45818 / CECT 9043 / HFP020203 / CcI3), this protein is Mycothiol acetyltransferase.